Consider the following 162-residue polypeptide: Cyclic pyranopterin monophosphate synthase (162 aa).

Residues 75–77 (LCH) and 113–114 (ME) each bind substrate. The active site involves D128.

It belongs to the MoaC family. Homohexamer; trimer of dimers.

It catalyses the reaction (8S)-3',8-cyclo-7,8-dihydroguanosine 5'-triphosphate = cyclic pyranopterin phosphate + diphosphate. It functions in the pathway cofactor biosynthesis; molybdopterin biosynthesis. Functionally, catalyzes the conversion of (8S)-3',8-cyclo-7,8-dihydroguanosine 5'-triphosphate to cyclic pyranopterin monophosphate (cPMP). The polypeptide is Cyclic pyranopterin monophosphate synthase (Klebsiella pneumoniae subsp. pneumoniae (strain ATCC 700721 / MGH 78578)).